The sequence spans 257 residues: Phycoerythrobilin:ferredoxin oxidoreductase (257 aa).

This sequence belongs to the HY2 family.

It carries out the reaction (3Z)-phycoerythrobilin + oxidized 2[4Fe-4S]-[ferredoxin] = 15,16-dihydrobiliverdin + reduced 2[4Fe-4S]-[ferredoxin] + 2 H(+). Catalyzes the two-electron reduction of the C2 and C3(1) diene system of 15,16-dihydrobiliverdin. This chain is Phycoerythrobilin:ferredoxin oxidoreductase (pebB), found in Synechococcus sp. (strain WH8020).